Consider the following 452-residue polypeptide: MTAKPTIAFSHLGCEKNRIDTEHMIGLLAEAGYGIDANEALADVVVVNTCSFIQAAREESVRTLVELAESGKKIVIAGCLAQHFQDQLLAELPEAIALVGTGDYHRIVDVLQRTESGERVNAISQEPSFIADENLPRYRTTTSAVAYLRVAEGCDYRCAFCIIPHLRGKRRSRSIESIVAEAKQLAAEGVQELVLISQITTNYGLDRYGKPMLAELLRQLGQVDVPWIRIHYAYPTGLTPEVIAAIRETHNVLPYLDLPLQHSHPEILKAMNRPWQGNVNDRIIEKLKEALPDAVLRTTFIAGFPGETEEHFRHLQQFIQRHEFDHVGVFAFSPEEGTAAIDLPNPVPDDVKEARRDALMATQQPIAERRNRAQIGRLVDVLIEQEHPSTGLKIGRSARFAPEVDGVVYVQGDAALGQLVTVRITDADIYDLHGEVASAADLFQVSRQPSLA.

The 112-residue stretch at 5-116 (PTIAFSHLGC…IVDVLQRTES (112 aa)) folds into the MTTase N-terminal domain. Residues C14, C50, C79, C154, C158, and C161 each coordinate [4Fe-4S] cluster. The 230-residue stretch at 140–369 (TTTSAVAYLR…MATQQPIAER (230 aa)) folds into the Radical SAM core domain. The region spanning 372–438 (RAQIGRLVDV…IYDLHGEVAS (67 aa)) is the TRAM domain.

This sequence belongs to the methylthiotransferase family. RimO subfamily. The cofactor is [4Fe-4S] cluster.

The protein resides in the cytoplasm. The enzyme catalyses L-aspartate(89)-[ribosomal protein uS12]-hydrogen + (sulfur carrier)-SH + AH2 + 2 S-adenosyl-L-methionine = 3-methylsulfanyl-L-aspartate(89)-[ribosomal protein uS12]-hydrogen + (sulfur carrier)-H + 5'-deoxyadenosine + L-methionine + A + S-adenosyl-L-homocysteine + 2 H(+). Functionally, catalyzes the methylthiolation of an aspartic acid residue of ribosomal protein uS12. This chain is Ribosomal protein uS12 methylthiotransferase RimO, found in Synechococcus sp. (strain ATCC 27144 / PCC 6301 / SAUG 1402/1) (Anacystis nidulans).